The primary structure comprises 561 residues: Dihydroxy-acid dehydratase (561 aa).

Cys-50 contacts [2Fe-2S] cluster. Asp-82 contributes to the Mg(2+) binding site. A [2Fe-2S] cluster-binding site is contributed by Cys-123. Residues Asp-124 and Lys-125 each coordinate Mg(2+). Position 125 is an N6-carboxylysine (Lys-125). Cys-195 is a binding site for [2Fe-2S] cluster. A Mg(2+)-binding site is contributed by Glu-447. Residue Ser-473 is the Proton acceptor of the active site.

This sequence belongs to the IlvD/Edd family. In terms of assembly, homodimer. [2Fe-2S] cluster is required as a cofactor. The cofactor is Mg(2+).

It catalyses the reaction (2R)-2,3-dihydroxy-3-methylbutanoate = 3-methyl-2-oxobutanoate + H2O. The enzyme catalyses (2R,3R)-2,3-dihydroxy-3-methylpentanoate = (S)-3-methyl-2-oxopentanoate + H2O. The protein operates within amino-acid biosynthesis; L-isoleucine biosynthesis; L-isoleucine from 2-oxobutanoate: step 3/4. It functions in the pathway amino-acid biosynthesis; L-valine biosynthesis; L-valine from pyruvate: step 3/4. In terms of biological role, functions in the biosynthesis of branched-chain amino acids. Catalyzes the dehydration of (2R,3R)-2,3-dihydroxy-3-methylpentanoate (2,3-dihydroxy-3-methylvalerate) into 2-oxo-3-methylpentanoate (2-oxo-3-methylvalerate) and of (2R)-2,3-dihydroxy-3-methylbutanoate (2,3-dihydroxyisovalerate) into 2-oxo-3-methylbutanoate (2-oxoisovalerate), the penultimate precursor to L-isoleucine and L-valine, respectively. The sequence is that of Dihydroxy-acid dehydratase from Synechocystis sp. (strain ATCC 27184 / PCC 6803 / Kazusa).